The primary structure comprises 848 residues: Phosphatidate phosphatase LPIN3 (848 aa).

The interval 1 to 108 (MNYVGQLAET…VPPRLCTSPI (108 aa)) is N-LIP. Disordered regions lie at residues 97-233 (EDVP…SPLR), 271-298 (PEEP…PGVR), and 314-373 (AVDS…NQHL). The Nuclear localization signal motif lies at 135-144 (GRRKRRRRRK). Residues 135-146 (GRRKRRRRRKPR) show a composition bias toward basic residues. Acidic residues predominate over residues 151–164 (DAVDSSSEELEAGA). Phosphoserine occurs at positions 155 and 156. Residues 165–191 (ESELTLLEKPTPESPSAQEAEEPSSQP) show a composition bias toward low complexity. A Phosphoserine modification is found at Ser-218. Residues 271–282 (PEEPSPSSSPSE) are compositionally biased toward low complexity. A compositionally biased stretch (polar residues) spans 342–358 (KSWSWTTPESHTPSGHP). Ser-460 is modified (phosphoserine). A compositionally biased stretch (basic and acidic residues) spans 536–556 (EEHSSQREKAATRKQQGEKTE). The segment at 536–568 (EEHSSQREKAATRKQQGEKTEVLSSDDDVPDSP) is disordered. The interval 587-789 (YKKSLRLSSD…RIFTVNPRGE (203 aa)) is C-LIP. The short motif at 641 to 645 (DIDGT) is the DXDXT motif element. The LXXIL motif motif lies at 652–656 (LGHIL).

It belongs to the lipin family. Mg(2+) serves as cofactor. As to expression, significant expression in intestine and other regions of the gastrointestinal tract.

Its subcellular location is the nucleus. It carries out the reaction a 1,2-diacyl-sn-glycero-3-phosphate + H2O = a 1,2-diacyl-sn-glycerol + phosphate. Its activity is regulated as follows. Inhibited by N-ethylmaleimide. Magnesium-dependent phosphatidate phosphatase enzyme which catalyzes the conversion of phosphatidic acid to diacylglycerol during triglyceride, phosphatidylcholine and phosphatidylethanolamine biosynthesis therefore regulates fatty acid metabolism. This is Phosphatidate phosphatase LPIN3 from Mus musculus (Mouse).